We begin with the raw amino-acid sequence, 452 residues long: Asparagine--tRNA ligase (452 aa).

Belongs to the class-II aminoacyl-tRNA synthetase family. Homodimer.

It localises to the cytoplasm. The enzyme catalyses tRNA(Asn) + L-asparagine + ATP = L-asparaginyl-tRNA(Asn) + AMP + diphosphate + H(+). This chain is Asparagine--tRNA ligase, found in Mycoplasma mycoides subsp. mycoides SC (strain CCUG 32753 / NCTC 10114 / PG1).